A 257-amino-acid polypeptide reads, in one-letter code: Imidazole glycerol phosphate synthase subunit HisF (257 aa).

Catalysis depends on residues D11 and D130.

The protein belongs to the HisA/HisF family. In terms of assembly, heterodimer of HisH and HisF.

It is found in the cytoplasm. It catalyses the reaction 5-[(5-phospho-1-deoxy-D-ribulos-1-ylimino)methylamino]-1-(5-phospho-beta-D-ribosyl)imidazole-4-carboxamide + L-glutamine = D-erythro-1-(imidazol-4-yl)glycerol 3-phosphate + 5-amino-1-(5-phospho-beta-D-ribosyl)imidazole-4-carboxamide + L-glutamate + H(+). The protein operates within amino-acid biosynthesis; L-histidine biosynthesis; L-histidine from 5-phospho-alpha-D-ribose 1-diphosphate: step 5/9. IGPS catalyzes the conversion of PRFAR and glutamine to IGP, AICAR and glutamate. The HisF subunit catalyzes the cyclization activity that produces IGP and AICAR from PRFAR using the ammonia provided by the HisH subunit. In Aliivibrio salmonicida (strain LFI1238) (Vibrio salmonicida (strain LFI1238)), this protein is Imidazole glycerol phosphate synthase subunit HisF.